Consider the following 316-residue polypeptide: MAETEEEEDSEAWLRLKPVEPLPSQCCGSGCSPCVFDLYYRDLERWETARARNDRSLLSGKQPPESQSCSAKLSPETFLAFHISTMEKVTKDTYLVRFTLPGNSRLGLRPGQHLILRGVVDGLEIQRAYTPISPVTAEGYFDVLIKCYRTGLMSQYVESWRTGDTAFWRGPFGSFLYEPKKYGELLMLAAGTGLAPMVPILQSITDDEDDETFVTLVGCFKTFEGIYLKTFFQEQARFWNVQTFFVLSQEVSPEQLPWSYRDKTHFGRLGQELVAELVACCRRKPFTLVCGSPAFNEDMARCLLSAGLTEDSYFLF.

The region spanning 17-53 (KPVEPLPSQCCGSGCSPCVFDLYYRDLERWETARARN) is the Oxidoreductase-like domain. Residues 76–178 (ETFLAFHIST…RGPFGSFLYE (103 aa)) enclose the FAD-binding FR-type domain. FAD-binding positions include 158–173 (ESWR…GPFG) and 183–215 (GELL…TFVT).

It belongs to the flavoprotein pyridine nucleotide cytochrome reductase family. FAD is required as a cofactor.

The catalysed reaction is 2 Fe(III)-[cytochrome b5] + NADH = 2 Fe(II)-[cytochrome b5] + NAD(+) + H(+). NADH-cytochrome b5 reductases are involved in desaturation and elongation of fatty acids, cholesterol biosynthesis, drug metabolism, and, in erythrocyte, methemoglobin reduction. This Mus musculus (Mouse) protein is NADH-cytochrome b5 reductase-like (Cyb5rl).